The following is a 72-amino-acid chain: Gas vesicle protein A (72 aa).

This sequence belongs to the gas vesicle GvpA family. As to quaternary structure, the gas vesicle shell is 2 nm thick and consists of a single layer of this protein. It forms helical ribs nearly perpendicular to the long axis of the vesicle.

Its subcellular location is the gas vesicle shell. Functionally, gas vesicles are hollow, gas filled proteinaceous nanostructures found in some microorganisms. During planktonic growth they allow positioning of the organism at a favorable depth for light or nutrient acquisition. GvpA forms the protein shell. In Synechococcus sp. (strain JA-3-3Ab) (Cyanobacteria bacterium Yellowstone A-Prime), this protein is Gas vesicle protein A.